The primary structure comprises 155 residues: S-ribosylhomocysteine lyase (155 aa).

Residues His-58, His-62, and Cys-125 each contribute to the Fe cation site.

The protein belongs to the LuxS family. As to quaternary structure, homodimer. Requires Fe cation as cofactor.

It catalyses the reaction S-(5-deoxy-D-ribos-5-yl)-L-homocysteine = (S)-4,5-dihydroxypentane-2,3-dione + L-homocysteine. Functionally, involved in the synthesis of autoinducer 2 (AI-2) which is secreted by bacteria and is used to communicate both the cell density and the metabolic potential of the environment. The regulation of gene expression in response to changes in cell density is called quorum sensing. Catalyzes the transformation of S-ribosylhomocysteine (RHC) to homocysteine (HC) and 4,5-dihydroxy-2,3-pentadione (DPD). This Chromohalobacter salexigens (strain ATCC BAA-138 / DSM 3043 / CIP 106854 / NCIMB 13768 / 1H11) protein is S-ribosylhomocysteine lyase.